The chain runs to 320 residues: 4-diphosphocytidyl-2-C-methyl-D-erythritol kinase (320 aa).

Residue Lys-20 is part of the active site. Residue 112–122 coordinates ATP; that stretch reads PVAGGMGGGSA. Asp-154 is an active-site residue.

It belongs to the GHMP kinase family. IspE subfamily.

The enzyme catalyses 4-CDP-2-C-methyl-D-erythritol + ATP = 4-CDP-2-C-methyl-D-erythritol 2-phosphate + ADP + H(+). The protein operates within isoprenoid biosynthesis; isopentenyl diphosphate biosynthesis via DXP pathway; isopentenyl diphosphate from 1-deoxy-D-xylulose 5-phosphate: step 3/6. Its function is as follows. Catalyzes the phosphorylation of the position 2 hydroxy group of 4-diphosphocytidyl-2C-methyl-D-erythritol. In Arthrobacter sp. (strain FB24), this protein is 4-diphosphocytidyl-2-C-methyl-D-erythritol kinase.